The sequence spans 927 residues: Autophagy-related protein 13 (927 aa).

Disordered regions lie at residues Met1–Asp66, Ser334–Pro359, Leu388–Gly559, Thr628–Glu716, and Gln786–Trp927. Residues Pro14–Arg30 show a composition bias toward polar residues. Polar residues-rich tracts occupy residues Gln393–Pro402, Pro513–Phe523, and Gly544–Gln557. Residues Ser630 to Ser671 are compositionally biased toward low complexity. Positions Leu684–Glu716 are enriched in polar residues. Residues Ser793–Pro803 show a composition bias toward basic and acidic residues. The segment covering His850–Arg868 has biased composition (polar residues). Positions Pro891–Arg901 are enriched in basic and acidic residues.

Belongs to the ATG13 family. Fungi subfamily. Hypophosphorylated form interacts with ATG1 to form the ATG1-ATG13 kinase complex. The ATG1-ATG13 complex interacts with the ATG17-ATG29-ATG31 complex through direct interaction with ATG17.

The protein localises to the cytoplasm. It is found in the preautophagosomal structure. Activates the ATG1 kinase in a nutritional condition dependent manner through the TOR pathway, leading to autophagy. Involved in ATG9 and ATG23 cycling through the pre-autophagosomal structure. Also involved in cytoplasm to vacuole transport (Cvt) and more specifically in Cvt vesicle formation. Seems to play a role in the switching machinery regulating the conversion between the Cvt pathway and autophagy. Finally, ATG13 is also required for glycogen storage during stationary phase. Autophagy is required for proper vegetative growth, asexual/sexual reproduction, and full virulence. Autophagy is particularly involved in the biosynthesis of deoxynivalenol (DON), an important virulence determinant. The sequence is that of Autophagy-related protein 13 from Gibberella zeae (strain ATCC MYA-4620 / CBS 123657 / FGSC 9075 / NRRL 31084 / PH-1) (Wheat head blight fungus).